A 466-amino-acid polypeptide reads, in one-letter code: Methylenetetrahydrofolate--tRNA-(uracil-5-)-methyltransferase TrmFO (466 aa).

14–19 (GGGLAG) is a binding site for FAD.

The protein belongs to the MnmG family. TrmFO subfamily. Requires FAD as cofactor.

It is found in the cytoplasm. The catalysed reaction is uridine(54) in tRNA + (6R)-5,10-methylene-5,6,7,8-tetrahydrofolate + NADH + H(+) = 5-methyluridine(54) in tRNA + (6S)-5,6,7,8-tetrahydrofolate + NAD(+). It carries out the reaction uridine(54) in tRNA + (6R)-5,10-methylene-5,6,7,8-tetrahydrofolate + NADPH + H(+) = 5-methyluridine(54) in tRNA + (6S)-5,6,7,8-tetrahydrofolate + NADP(+). Functionally, catalyzes the folate-dependent formation of 5-methyl-uridine at position 54 (M-5-U54) in all tRNAs. This Brucella abortus (strain 2308) protein is Methylenetetrahydrofolate--tRNA-(uracil-5-)-methyltransferase TrmFO.